The primary structure comprises 252 residues: Probable transcriptional regulatory protein RF_0799 (252 aa).

The segment at 1–21 is disordered; that stretch reads MAGHSKFKNIQHRKGAQDKKR.

The protein belongs to the TACO1 family.

The protein localises to the cytoplasm. The chain is Probable transcriptional regulatory protein RF_0799 from Rickettsia felis (strain ATCC VR-1525 / URRWXCal2) (Rickettsia azadi).